The primary structure comprises 239 residues: tRNA (guanine-N(7)-)-methyltransferase (239 aa).

S-adenosyl-L-methionine is bound by residues Glu-69, Glu-94, Asp-121, and Asp-144. Asp-144 is a catalytic residue. Residue Lys-148 participates in substrate binding. Residues 150-155 form an interaction with RNA region; it reads RHNKRR. Substrate is bound by residues Asp-180 and 217-220; that span reads TKFE.

Belongs to the class I-like SAM-binding methyltransferase superfamily. TrmB family. In terms of assembly, monomer.

It carries out the reaction guanosine(46) in tRNA + S-adenosyl-L-methionine = N(7)-methylguanosine(46) in tRNA + S-adenosyl-L-homocysteine. Its pathway is tRNA modification; N(7)-methylguanine-tRNA biosynthesis. Catalyzes the formation of N(7)-methylguanine at position 46 (m7G46) in tRNA. This Yersinia enterocolitica serotype O:8 / biotype 1B (strain NCTC 13174 / 8081) protein is tRNA (guanine-N(7)-)-methyltransferase.